A 224-amino-acid polypeptide reads, in one-letter code: Glutathione S-transferase D7 (224 aa).

A GST N-terminal domain is found at 2-83 (PNLDLYNFPM…YLVEKYGKPD (82 aa)). Glutathione is bound by residues 53 to 55 (HTI) and 67 to 69 (ESR). Positions 90–210 (DPQKRALINQ…LESLQQGKKF (121 aa)) constitute a GST C-terminal domain.

It belongs to the GST superfamily. Delta family. In terms of assembly, homodimer.

It carries out the reaction RX + glutathione = an S-substituted glutathione + a halide anion + H(+). Functionally, conjugation of reduced glutathione to a wide number of exogenous and endogenous hydrophobic electrophiles. May be involved in detoxification. In Drosophila melanogaster (Fruit fly), this protein is Glutathione S-transferase D7.